Consider the following 132-residue polypeptide: Agouti-signaling protein (132 aa).

Residues 1 to 22 form the signal peptide; it reads MDVTRLLLATLLVFLCFFTAYS. Asparagine 39 is a glycosylation site (N-linked (GlcNAc...) asparagine). Residues 62–88 form a disordered region; sequence ISRKEAEKKRSSKKEASMKKVARPRTP. Basic and acidic residues predominate over residues 63–79; the sequence is SRKEAEKKRSSKKEASM. 5 disulfides stabilise this stretch: cysteine 93–cysteine 108, cysteine 100–cysteine 114, cysteine 107–cysteine 125, cysteine 111–cysteine 132, and cysteine 116–cysteine 123. The Agouti domain occupies 93-132; that stretch reads CVATRDSCKPPAPACCDPCASCQCRFFRSACSCRVLSLNC.

It localises to the secreted. In terms of biological role, involved in the regulation of melanogenesis. The binding of ASP to MC1R precludes alpha-MSH initiated signaling and thus blocks production of cAMP, leading to a down-regulation of eumelanogenesis (brown/black pigment) and thus increasing synthesis of pheomelanin (yellow/red pigment). This is Agouti-signaling protein (ASIP) from Chlorocebus aethiops (Green monkey).